Consider the following 306-residue polypeptide: D-alanine--D-alanine ligase B (306 aa).

Residues Glu-15 and Ser-150 contribute to the active site. One can recognise an ATP-grasp domain in the interval 101–303; sequence KLLWQGAGLP…FSQLVVRILE (203 aa). Residue 134 to 189 coordinates ATP; sequence ISALGLPVIVKPSREGSSVGMSKVVAENALQDALRLAFQHDEEVLIEKWLSGPEFT. Mg(2+) is bound by residues Asp-257, Glu-270, and Asn-272. The active site involves Ser-281.

The protein belongs to the D-alanine--D-alanine ligase family. In terms of assembly, monomer. Mg(2+) is required as a cofactor. Requires Mn(2+) as cofactor.

Its subcellular location is the cytoplasm. It catalyses the reaction 2 D-alanine + ATP = D-alanyl-D-alanine + ADP + phosphate + H(+). It functions in the pathway cell wall biogenesis; peptidoglycan biosynthesis. Functionally, cell wall formation. This chain is D-alanine--D-alanine ligase B (ddlB), found in Escherichia coli (strain K12).